The chain runs to 295 residues: Acetaldehyde dehydrogenase (295 aa).

11–14 (SGNI) contacts NAD(+). Cys127 serves as the catalytic Acyl-thioester intermediate. NAD(+)-binding positions include 158–166 (SAGPGTRSN) and Asn269.

It belongs to the acetaldehyde dehydrogenase family.

The enzyme catalyses acetaldehyde + NAD(+) + CoA = acetyl-CoA + NADH + H(+). The polypeptide is Acetaldehyde dehydrogenase (Brevibacillus brevis (strain 47 / JCM 6285 / NBRC 100599)).